The primary structure comprises 1219 residues: MMRTQSDEHVATRSSSANKQRQRVRFPKDNDPTTKRILYPADENDDGHDDSDEKETSVVIPTPSVVIVGPDGEEPASAPISTGSPGADTDDYFSTHPNKKKSTLKSPGTPTTYSPSVPAGRARSATGVTTHTPPKGSSLSSTTLMNTLLNSSGLGQYDTESEEDDDEDEEVTFTARPRQPAQPSNSEEAGPSEQPQFRIDKVKSISLMRARQSRAREAQEEETVASTDDDGVGNNDMFKIDDDARSVSTDESSDDESDADRAARADAPLIERERASAAHVDAFAQNSERGSNMAVGAAIMGGLASFGSMSGGGMAPGAVDRSSESSQTLDDQRDQRDSHLALRRENALGMHSHSAPGSEDHTPGDASGNASAGNHDDGEDSLAGHDINDIPLVALDRRLEDIKEKRAEDKEKRAEDNEKERQHHHHNHHHHHSSETGPNTGASSPFSEEEKDREAEEAEILRDQARDLVNQHKHAVHTPDAEDEDYDPFTAPAVDYFSSIHIHDDDEDEDNHGNFLTYDAADGSVTPTHEDYVAPPKRFKQGVLGALLKLYNEEEGNKSTSTLATTVGDGTSTGDVSPMLYGSEPTTPGGTPIDHPTKSKTKTTQKLGLKKKKKELLKIIEDQRKEKEENKKRPKWYDKSRSTSPSPGGTPAPHHHHHIPGLHLHHHTKGHQRSHSEGYLDEMETAAGGGGDGGDKPPDRPRSLRSEALRPVKDIKKLNKMAKNTGKNFKKRERELKRRRRQEVKITVHIAELLQRQRFILRMCRALMLYGAPTHRLEEYMKMTSRILEIDGQFLYIPGCMIVSFGDATTHTSEMQLVRCVQGVNLSKLQDTHEIYKEVVHDMIGVEEASNRLDEILRSKNLYPPWLCVIFFACGTGVVSPYAFRGRWADIPMCIILGSVVGFFQIIVAPRSDLYNNVFEVSMSILISFLARAIGTISSGGSHPFCFAAIAQGSLAIILPGYIVLCGSLELQSKNIVAGSIRMFYAVIYSMFLGFGITLGAVVYGWCDHNATRQDKCPQQLDPLWRILFVPLYSFFIALVNQARITQLPSMLLISGAGYTVTYFVGANIPDPDNSSYLTSAIGAFTIGILGNLYSRLGHGLAFAAMLPGIFVQVPSGVASQGSLVAAIANSNRLIGNKNVTTTIRETIVNSATSTVVTRVQTSLLTETSTAAIEQATPGGAANLGFTMIQVAIGITVGLFAATLCVYPFGKKRSGLFTF.

A compositionally biased stretch (basic and acidic residues) spans 1 to 11; the sequence is MMRTQSDEHVA. Disordered stretches follow at residues 1 to 273, 303 to 490, 503 to 533, and 555 to 713; these read MMRT…IERE, LASF…DPFT, HDDD…EDYV, and EGNK…RPVK. A compositionally biased stretch (acidic residues) spans 42–53; it reads DENDDGHDDSDE. Low complexity predominate over residues 57 to 68; the sequence is SVVIPTPSVVIV. Polar residues predominate over residues 104–115; sequence LKSPGTPTTYSP. The span at 136 to 155 shows a compositional bias: low complexity; it reads GSSLSSTTLMNTLLNSSGLG. Composition is skewed to acidic residues over residues 159–171 and 219–231; these read TESE…DEEV and QEEE…DDDG. 3 stretches are compositionally biased toward basic and acidic residues: residues 259–273, 330–346, and 395–421; these read ADRA…IERE, DDQR…RREN, and LDRR…EKER. Basic residues predominate over residues 422–432; the sequence is QHHHHNHHHHH. Polar residues predominate over residues 435–446; that stretch reads ETGPNTGASSPF. Residues 448-470 show a composition bias toward basic and acidic residues; sequence EEEKDREAEEAEILRDQARDLVN. Positions 565-577 are enriched in low complexity; the sequence is TTVGDGTSTGDVS. A compositionally biased stretch (basic residues) spans 598–615; it reads KSKTKTTQKLGLKKKKKE. The span at 616–641 shows a compositional bias: basic and acidic residues; the sequence is LLKIIEDQRKEKEENKKRPKWYDKSR. Residues 642 to 652 are compositionally biased toward low complexity; it reads STSPSPGGTPA. Over residues 653–673 the composition is skewed to basic residues; sequence PHHHHHIPGLHLHHHTKGHQR. A compositionally biased stretch (basic and acidic residues) spans 693–713; the sequence is GGDKPPDRPRSLRSEALRPVK. The next 10 membrane-spanning stretches (helical) occupy residues 864–884, 888–908, 918–938, 945–965, 983–1003, 1021–1041, 1049–1069, 1075–1095, 1100–1120, and 1184–1204; these read PPWL…PYAF, WADI…QIIV, VFEV…GTIS, FCFA…YIVL, MFYA…GAVV, LDPL…ALVN, PSML…GANI, SSYL…NLYS, GLAF…GVAS, and LGFT…AATL.

The protein belongs to the ThrE exporter (TC 2.A.79) family.

It is found in the membrane. In Yarrowia lipolytica (strain CLIB 122 / E 150) (Yeast), this protein is Pheromone-regulated membrane protein 10.